A 476-amino-acid chain; its full sequence is Proline--tRNA ligase 2 (476 aa).

The protein belongs to the class-II aminoacyl-tRNA synthetase family. ProS type 3 subfamily. As to quaternary structure, homodimer.

It is found in the cytoplasm. The enzyme catalyses tRNA(Pro) + L-proline + ATP = L-prolyl-tRNA(Pro) + AMP + diphosphate. Functionally, catalyzes the attachment of proline to tRNA(Pro) in a two-step reaction: proline is first activated by ATP to form Pro-AMP and then transferred to the acceptor end of tRNA(Pro). The sequence is that of Proline--tRNA ligase 2 from Bacillus thuringiensis (strain Al Hakam).